The primary structure comprises 357 residues: Zinc finger protein 830 (357 aa).

Residues 47 to 69 (CVVCNIQIKSELLWPAHILGKQH) form a C2H2-type zinc finger. Disordered stretches follow at residues 98–126 (RKGS…TKLP), 157–194 (DDDE…ADRL), and 231–255 (ALPE…PKDQ). Over residues 99 to 115 (KGSEPENQESKRIKGTE) the composition is skewed to basic and acidic residues. The segment covering 157–168 (DDDEVEGEEYEN) has biased composition (acidic residues). The segment covering 242–255 (ADAKVRKVDAPKDQ) has biased composition (basic and acidic residues). Positions 279-325 (AEEDEEGRLDRQIDEIDEQIECYRRVEHLRDLKDTLQDAKMEVLKSK) form a coiled coil.

It is found in the nucleus. The protein localises to the chromosome. The protein resides in the nucleus speckle. May act as an important regulator of the cell cycle that participates in the maintenance of genome integrity. This chain is Zinc finger protein 830, found in Xenopus tropicalis (Western clawed frog).